We begin with the raw amino-acid sequence, 636 residues long: Ubiquitin-activating enzyme E1-like (636 aa).

Residues 28-33 (GAGGIG), Asp52, 60-63 (NLNR), Lys76, and 121-126 (DNLAAR) contribute to the ATP site. 2 residues coordinate Zn(2+): Cys162 and Cys165. Cys177 (glycyl thioester intermediate) is an active-site residue. Residues Cys435 and Cys438 each contribute to the Zn(2+) site. The interval 581–636 (DGIVILDDDEGEITIDAEPINGSKKRPVDTEISEAPSNKRTKLVNEPTNSDIVELD) is disordered. Residues 586-595 (LDDDEGEITI) are compositionally biased toward acidic residues. Positions 619-622 (KRTK) match the Nuclear localization signal motif. Over residues 626 to 636 (EPTNSDIVELD) the composition is skewed to polar residues.

The protein belongs to the ubiquitin-activating E1 family. As to quaternary structure, heterodimer of UBA2 and AOS1. The complex binds SMT3. In terms of processing, multiubiquitinated in vivo.

It is found in the nucleus. The protein operates within protein modification; protein sumoylation. The dimeric enzyme acts as a SMT3 E1 ligase. It mediates ATP-dependent activation of SMT3 and formation of a thioester with a conserved cysteine residue on AOS1. The sequence is that of Ubiquitin-activating enzyme E1-like (UBA2) from Saccharomyces cerevisiae (strain ATCC 204508 / S288c) (Baker's yeast).